Here is a 235-residue protein sequence, read N- to C-terminus: Chaperone protein TorD (235 aa).

The protein belongs to the TorD/DmsD family. TorD subfamily.

Its subcellular location is the cytoplasm. Its function is as follows. Involved in the biogenesis of TorA. Acts on TorA before the insertion of the molybdenum cofactor and, as a result, probably favors a conformation of the apoenzyme that is competent for acquiring the cofactor. This Shewanella amazonensis (strain ATCC BAA-1098 / SB2B) protein is Chaperone protein TorD.